A 220-amino-acid chain; its full sequence is Uracil phosphoribosyltransferase 2 (220 aa).

GTP is bound at residue 77-80; the sequence is ARDI. 5-phospho-alpha-D-ribose 1-diphosphate is bound by residues arginine 87 and arginine 113. Arginine 134 serves as a coordination point for GTP. Residues aspartate 140 and 140 to 148 each bind 5-phospho-alpha-D-ribose 1-diphosphate; that span reads DPLLATGNS. Residue tyrosine 204 coordinates D-ribose 5-phosphate. Residues valine 205 and 210-212 each bind uracil; that span reads GDF. Aspartate 211 is a 5-phospho-alpha-D-ribose 1-diphosphate binding site.

It belongs to the UPRTase family. Mg(2+) serves as cofactor.

The enzyme catalyses UMP + diphosphate = 5-phospho-alpha-D-ribose 1-diphosphate + uracil. It functions in the pathway pyrimidine metabolism; UMP biosynthesis via salvage pathway; UMP from uracil: step 1/1. Its activity is regulated as follows. Allosterically activated by GTP. Its function is as follows. Catalyzes the conversion of uracil and 5-phospho-alpha-D-ribose 1-diphosphate (PRPP) to UMP and diphosphate. The chain is Uracil phosphoribosyltransferase 2 from Schizosaccharomyces pombe (strain 972 / ATCC 24843) (Fission yeast).